Reading from the N-terminus, the 928-residue chain is Isoleucine--tRNA ligase (928 aa).

Positions 57-67 (PFANGNIHMGH) match the 'HIGH' region motif. E552 provides a ligand contact to L-isoleucyl-5'-AMP. Residues 593-597 (KMSKS) carry the 'KMSKS' region motif. K596 contributes to the ATP binding site. 4 residues coordinate Zn(2+): C887, C890, C907, and C910.

The protein belongs to the class-I aminoacyl-tRNA synthetase family. IleS type 1 subfamily. In terms of assembly, monomer. Zn(2+) is required as a cofactor.

Its subcellular location is the cytoplasm. The catalysed reaction is tRNA(Ile) + L-isoleucine + ATP = L-isoleucyl-tRNA(Ile) + AMP + diphosphate. In terms of biological role, catalyzes the attachment of isoleucine to tRNA(Ile). As IleRS can inadvertently accommodate and process structurally similar amino acids such as valine, to avoid such errors it has two additional distinct tRNA(Ile)-dependent editing activities. One activity is designated as 'pretransfer' editing and involves the hydrolysis of activated Val-AMP. The other activity is designated 'posttransfer' editing and involves deacylation of mischarged Val-tRNA(Ile). The protein is Isoleucine--tRNA ligase of Latilactobacillus sakei subsp. sakei (strain 23K) (Lactobacillus sakei subsp. sakei).